Here is a 444-residue protein sequence, read N- to C-terminus: Glutamate--tRNA ligase 1 (444 aa).

Positions 10–20 match the 'HIGH' region motif; that stretch reads PSPTGRLHLGN. A 'KMSKS' region motif is present at residues 241–245; that stretch reads GLSKR. K244 contributes to the ATP binding site.

The protein belongs to the class-I aminoacyl-tRNA synthetase family. Glutamate--tRNA ligase type 1 subfamily. As to quaternary structure, monomer.

The protein localises to the cytoplasm. It carries out the reaction tRNA(Glu) + L-glutamate + ATP = L-glutamyl-tRNA(Glu) + AMP + diphosphate. Catalyzes the attachment of glutamate to tRNA(Glu) in a two-step reaction: glutamate is first activated by ATP to form Glu-AMP and then transferred to the acceptor end of tRNA(Glu). The chain is Glutamate--tRNA ligase 1 from Rhodospirillum rubrum (strain ATCC 11170 / ATH 1.1.1 / DSM 467 / LMG 4362 / NCIMB 8255 / S1).